The primary structure comprises 275 residues: 2,3,4,5-tetrahydropyridine-2,6-dicarboxylate N-succinyltransferase (275 aa).

Substrate is bound by residues Arg106 and Asp143.

The protein belongs to the transferase hexapeptide repeat family. Homotrimer.

The protein localises to the cytoplasm. It carries out the reaction (S)-2,3,4,5-tetrahydrodipicolinate + succinyl-CoA + H2O = (S)-2-succinylamino-6-oxoheptanedioate + CoA. It functions in the pathway amino-acid biosynthesis; L-lysine biosynthesis via DAP pathway; LL-2,6-diaminopimelate from (S)-tetrahydrodipicolinate (succinylase route): step 1/3. This Burkholderia ambifaria (strain ATCC BAA-244 / DSM 16087 / CCUG 44356 / LMG 19182 / AMMD) (Burkholderia cepacia (strain AMMD)) protein is 2,3,4,5-tetrahydropyridine-2,6-dicarboxylate N-succinyltransferase.